Reading from the N-terminus, the 79-residue chain is Small ribosomal subunit protein bS21A (79 aa).

A disordered region spans residues 57-79; sequence LARKKLQREGLLPAPKKVLRPTR.

The protein belongs to the bacterial ribosomal protein bS21 family.

The polypeptide is Small ribosomal subunit protein bS21A (Rhizobium johnstonii (strain DSM 114642 / LMG 32736 / 3841) (Rhizobium leguminosarum bv. viciae)).